Here is a 194-residue protein sequence, read N- to C-terminus: Imidazoleglycerol-phosphate dehydratase (194 aa).

The protein belongs to the imidazoleglycerol-phosphate dehydratase family.

Its subcellular location is the cytoplasm. The enzyme catalyses D-erythro-1-(imidazol-4-yl)glycerol 3-phosphate = 3-(imidazol-4-yl)-2-oxopropyl phosphate + H2O. It functions in the pathway amino-acid biosynthesis; L-histidine biosynthesis; L-histidine from 5-phospho-alpha-D-ribose 1-diphosphate: step 6/9. The sequence is that of Imidazoleglycerol-phosphate dehydratase from Bacillus cereus (strain B4264).